Consider the following 326-residue polypeptide: Lipid droplet-associated hydrolase (326 aa).

Residue serine 140 is the Nucleophile of the active site. Residues aspartate 272 and histidine 301 each act as charge relay system in the active site.

This sequence belongs to the AB hydrolase superfamily. LDAH family. Expressed in liver, adrenal gland, prostate, spleen, kidney, brown and white adipose tissue, testis and to a lesser extent in brain (at protein level). Expressed in peritoneal macrophages and bone marrow-derived macrophages (at protein level). Highly expressed in macrophage and foam cell-rich areas in atherosclerotic lesions (at protein level). mRNA, but no protein, expressed in heart and muscle.

The protein resides in the lipid droplet. It localises to the endoplasmic reticulum. It carries out the reaction a cholesterol ester + H2O = cholesterol + a fatty acid + H(+). In terms of biological role, probable serine lipid hydrolase associated with lipid droplets. Has low cholesterol esterase activity. Appears to lack triglyceride lipase activity. Involved in cholesterol and triglyceride homeostasis; stimulates cellular triglyceride accumulation and cellular cholesterol release. Acts antagonistically with PNPLA2/ATGL in regulation of cellular lipid stores. May regulate triglyceride accumulation indirectly through stimulation of PNPLA2/ATGL ubiquitination and proteasomal degradation. Promotes microtubule-dependent lipid droplet fusion. Highly expressed in macrophage-rich areas in atherosclerotic lesions, suggesting that it could promote cholesterol ester turnover in macrophages. Functionally, stimulates cellular triglyceride accumulation and lipid droplet fusion. Its function is as follows. Associates with lipid droplets but does not stimulate cellular triglyceride accumulation, lipid droplet fusion or ATGL proteasomal degradation. This chain is Lipid droplet-associated hydrolase, found in Mus musculus (Mouse).